The following is a 69-amino-acid chain: Ribosome modulation factor (69 aa).

The protein belongs to the ribosome modulation factor family.

It is found in the cytoplasm. Functionally, during stationary phase, converts 70S ribosomes to an inactive dimeric form (100S ribosomes). This Marinomonas mediterranea (strain ATCC 700492 / JCM 21426 / NBRC 103028 / MMB-1) protein is Ribosome modulation factor.